A 187-amino-acid polypeptide reads, in one-letter code: UPF0232 protein Mb0004 (187 aa).

2 stretches are compositionally biased toward basic and acidic residues: residues 1 to 17 and 35 to 45; these read MTGSVDRPDQNRGERLM and AARARGQDAGR. Disordered regions lie at residues 1–23, 35–75, and 168–187; these read MTGSVDRPDQNRGERLMKSPGLD, AARA…DPQP, and PSWRKGPRHIAGRGPRDTYG.

It belongs to the UPF0232 family.

The sequence is that of UPF0232 protein Mb0004 from Mycobacterium bovis (strain ATCC BAA-935 / AF2122/97).